A 548-amino-acid polypeptide reads, in one-letter code: Tripartite motif-containing protein 55 (548 aa).

Residues 10–66 (FSKEQQTMDNLEKQLICPICLEMFTKPVVILPCQHNLCRKCASDIFQASNPYLPTRG) form an RING-type zinc finger. A B box-type zinc finger spans residues 103 to 145 (NIIDIYKQESTRPEKKSDQPMCEEHEEERINIYCLNCEVPTCS). 4 residues coordinate Zn(2+): cysteine 124, histidine 127, cysteine 147, and histidine 153. The stretch at 168-248 (QKSELSDGIA…EKLEHVRALI (81 aa)) forms a coiled coil. The region spanning 269–327 (MDEPEMAVFLQNAKTLLKKISEASKAFQMEKIEHGYENMNHFTVNLNREEKIIREIDFY) is the COS domain. Residues 326–532 (FYREDEDEEE…PASGSGADSE (207 aa)) are disordered. Composition is skewed to acidic residues over residues 328 to 339 (REDEDEEEEEGG) and 347 to 360 (GEVG…EEVE). 2 stretches are compositionally biased toward low complexity: residues 484–496 (VAAA…AAVS) and 512–531 (EAPP…GADS).

Homooligomer and heterooligomer. Interacts with titin/TTN. Interacts with myosins. Interacts with SQSTM1 and NBR1. Isoform 4 may not able to interact with isoform 1, isoform 2 and isoform 3. Probably interacts with TRIM63 and TRIM54. Targeted for degradation through the proteasomal and lysosomal pathways in the presence of SUMO3. In terms of tissue distribution, highly expressed in muscle. Low-level expression in liver.

It localises to the nucleus. Its subcellular location is the cytoplasm. It catalyses the reaction S-ubiquitinyl-[E2 ubiquitin-conjugating enzyme]-L-cysteine + [acceptor protein]-L-lysine = [E2 ubiquitin-conjugating enzyme]-L-cysteine + N(6)-ubiquitinyl-[acceptor protein]-L-lysine.. Functionally, E3 ubiquitin ligase that plays an important role in regulating cardiac development and contractility, muscle growth, metabolism, and fiber-type differentiation. Acts as a critical factor that regulates cardiomyocyte size during development in concert with TRIM63 by regulating E2F1-mediated gene expression. Plays a role in apoptosis induction in cardiomyocytes by promoting ubiquitination of the DUSP1 phosphatase. Promotes non-canonical NF-kappa-B signaling and B-cell-mediated immune responses by mediating NFKB2 'Lys-48'-linked ubiquitination and processing. In turn, NFKB2 is further processed by valosin-containing protein/VCP, an ATPase that mediates ubiquitin-dependent protein degradation by the proteasome. May play a role in preventing macrophages from producing inflammatory factors and migrating by downregulating the level of nuclear NF-kappa-B subunit RELA. Also modifies PPARG via polyubiquitination and accelerates PPARG proteasomal degradation to inhibit its activity. This is Tripartite motif-containing protein 55 (TRIM55) from Homo sapiens (Human).